The chain runs to 183 residues: ADP-ribosylation factor 3 (183 aa).

A lipid anchor (N-myristoyl glycine) is attached at Gly-2. Residues Gly-24–Thr-31, Asp-67–Gln-71, and Asn-126–Asp-129 contribute to the GTP site.

Belongs to the small GTPase superfamily. Arf family. As to quaternary structure, interacts with RUD3.

Its subcellular location is the golgi apparatus. In terms of biological role, GTP-binding protein involved in protein trafficking; may modulate vesicle budding and uncoating within the Golgi apparatus. The sequence is that of ADP-ribosylation factor 3 (ARF3) from Saccharomyces cerevisiae (strain ATCC 204508 / S288c) (Baker's yeast).